A 337-amino-acid chain; its full sequence is Dolichyl-phosphate beta-glucosyltransferase ALG5C (337 aa).

Residues 1–6 are Lumenal-facing; sequence MNDLPP. Residues 7–27 form a helical membrane-spanning segment; that stretch reads IANLISNILFVLLIITFLYAL. Topologically, residues 28–337 are cytoplasmic; the sequence is CSRFVSDKTL…ADTPISDFEV (310 aa).

It belongs to the glycosyltransferase 2 family.

The protein resides in the endoplasmic reticulum membrane. The enzyme catalyses a di-trans,poly-cis-dolichyl phosphate + UDP-alpha-D-glucose = a di-trans,poly-cis-dolichyl beta-D-glucosyl phosphate + UDP. The protein operates within protein modification; protein glycosylation. Functionally, dolichyl-phosphate beta-glucosyltransferase involved in the glycosylation of glycoproteins through the synthesis of dolichyl beta-D-glucosyl phosphate which serves as a sugar donor for transfer of three glucose residues to the Man-9-GlcNAc-2-PP-dolichol precursor to N-glycans. The chain is Dolichyl-phosphate beta-glucosyltransferase ALG5C from Trichomonas vaginalis (strain ATCC PRA-98 / G3).